A 1265-amino-acid polypeptide reads, in one-letter code: Shugoshin 2 (1265 aa).

Residues 69–116 (KENSRRITTEKMLLQKEVEKLNFENTFLRLKLNNLNKKLIDIEALMNN) are a coiled coil. Disordered regions lie at residues 161-202 (LTSN…STQD), 230-287 (DVPP…NLSA), 305-339 (LNCN…SARE), and 381-447 (GIKK…GAED). Positions 190 to 202 (SSGSTTQPLSTQD) are enriched in polar residues. Basic and acidic residues predominate over residues 232-242 (PPRESHSHSDQ). Residues 305-322 (LNCNNEINGHTNETNTEM) show a composition bias toward polar residues. Composition is skewed to basic and acidic residues over residues 389–410 (KTNE…EKKR) and 425–446 (IGEK…RGAE). The stretch at 452–476 (FNNEQLAQMNEQLAQVNELKKMTLQ) forms a coiled coil. The interval 499–526 (EQEETYSLSQSSGKFHQESKFDKGQNSL) is disordered. The span at 503–512 (TYSLSQSSGK) shows a compositional bias: polar residues. Residues 603 to 626 (EQNESNINKLRKKVNRKTEIISGM) are a coiled coil. Residues 1073–1083 (NKMTSKSKKRK) show a composition bias toward basic residues. A disordered region spans residues 1073–1093 (NKMTSKSKKRKTSIDPSPESH). Serine 1144 carries the post-translational modification Phosphoserine. Residues 1200-1265 (KVNRRTQKSG…EPSLRDKMRR (66 aa)) are disordered. Residues 1217-1230 (DLSNTSFVSNNTAE) show a composition bias toward polar residues. Residues 1231–1243 (SENKSEDLSSERT) are compositionally biased toward basic and acidic residues.

The protein belongs to the shugoshin family. Part of an astrin (SPAG5) -kinastrin (SKAP) complex containing KNSTRN, SPAG5, PLK1, DYNLL1 and SGO2. Interacts with CDCA8. Directly interacts with PPP2CA.

The protein localises to the nucleus. It is found in the chromosome. Its subcellular location is the centromere. The protein resides in the kinetochore. Its function is as follows. Cooperates with PPP2CA to protect centromeric cohesin from separase-mediated cleavage in oocytes specifically during meiosis I. Has a crucial role in protecting REC8 at centromeres from cleavage by separase. During meiosis, protects centromeric cohesion complexes until metaphase II/anaphase II transition, preventing premature release of meiosis-specific REC8 cohesin complexes from anaphase I centromeres. Is thus essential for an accurate gametogenesis. May act by targeting PPP2CA to centromeres, thus leading to cohesin dephosphorylation. Essential for recruiting KIF2C to the inner centromere and for correcting defective kinetochore attachments. Involved in centromeric enrichment of AUKRB in prometaphase. This chain is Shugoshin 2, found in Homo sapiens (Human).